Reading from the N-terminus, the 514-residue chain is GTPase-activating protein gyp1 (514 aa).

2 disordered regions span residues 17–65 (LWNG…QPPK) and 130–164 (LPRM…LHSS). Polar residues-rich tracts occupy residues 18 to 28 (WNGSSSATSDP) and 135 to 158 (RSTT…TTSR). In terms of domain architecture, Rab-GAP TBC spans 216-443 (GIPSEHRPIV…RMWDTYMAEG (228 aa)).

The protein localises to the golgi apparatus. It localises to the golgi stack. It is found in the cytoplasm. Its subcellular location is the nucleus. Functionally, stimulates specifically the GTPase activity of ypt1. Functions on the Golgi as a negative regulator of ypt1. In Schizosaccharomyces pombe (strain 972 / ATCC 24843) (Fission yeast), this protein is GTPase-activating protein gyp1.